A 333-amino-acid polypeptide reads, in one-letter code: Glyceraldehyde-3-phosphate dehydrogenase (333 aa).

Residue S1 is modified to N-acetylserine. NAD(+) is bound by residues 10 to 11 (RI), D31, and S118. D-glyceraldehyde 3-phosphate contacts are provided by residues 147–149 (SCT), T178, 207–208 (TG), and R230. C148 (nucleophile) is an active-site residue. N312 lines the NAD(+) pocket.

It belongs to the glyceraldehyde-3-phosphate dehydrogenase family. Homotetramer.

The protein resides in the cytoplasm. The enzyme catalyses D-glyceraldehyde 3-phosphate + phosphate + NAD(+) = (2R)-3-phospho-glyceroyl phosphate + NADH + H(+). The protein operates within carbohydrate degradation; glycolysis; pyruvate from D-glyceraldehyde 3-phosphate: step 1/5. This chain is Glyceraldehyde-3-phosphate dehydrogenase, found in Homarus americanus (American lobster).